A 337-amino-acid chain; its full sequence is 1-aminocyclopropane-1-carboxylate deaminase (337 aa).

The residue at position 50 (Lys-50) is an N6-(pyridoxal phosphate)lysine. The active-site Nucleophile is Ser-77.

This sequence belongs to the ACC deaminase/D-cysteine desulfhydrase family. Homotrimer. Pyridoxal 5'-phosphate serves as cofactor.

The enzyme catalyses 1-aminocyclopropane-1-carboxylate + H2O = 2-oxobutanoate + NH4(+). Catalyzes a cyclopropane ring-opening reaction, the irreversible conversion of 1-aminocyclopropane-1-carboxylate (ACC) to ammonia and alpha-ketobutyrate. Allows growth on ACC as a nitrogen source. This chain is 1-aminocyclopropane-1-carboxylate deaminase, found in Rhizobium rhizogenes (strain K84 / ATCC BAA-868) (Agrobacterium radiobacter).